The following is a 488-amino-acid chain: Probable malate:quinone oxidoreductase (488 aa).

It belongs to the MQO family. The cofactor is FAD.

The catalysed reaction is (S)-malate + a quinone = a quinol + oxaloacetate. Its pathway is carbohydrate metabolism; tricarboxylic acid cycle; oxaloacetate from (S)-malate (quinone route): step 1/1. In Neisseria meningitidis serogroup C / serotype 2a (strain ATCC 700532 / DSM 15464 / FAM18), this protein is Probable malate:quinone oxidoreductase.